The primary structure comprises 460 residues: Diguanylate cyclase DosC (460 aa).

A heme-binding site is contributed by His-98. A GGDEF domain is found at 325 to 458; the sequence is TPLSVLIIDV…GRNRVELWKA (134 aa). Asp-333 is a binding site for Mg(2+). Substrate is bound by residues Asn-341 and Asp-350. Mg(2+) is bound at residue Asp-376. Residue Asp-376 is the Proton acceptor of the active site.

It depends on heme as a cofactor. Mg(2+) is required as a cofactor.

The catalysed reaction is 2 GTP = 3',3'-c-di-GMP + 2 diphosphate. The protein operates within purine metabolism; 3',5'-cyclic di-GMP biosynthesis. In terms of biological role, globin-coupled heme-based oxygen sensor protein displaying diguanylate cyclase (DGC) activity in response to oxygen availability. Thus, catalyzes the synthesis of cyclic diguanylate (c-di-GMP) via the condensation of 2 GTP molecules. Cyclic-di-GMP is a second messenger which controls cell surface-associated traits in bacteria. This Shigella sonnei (strain Ss046) protein is Diguanylate cyclase DosC (dosC).